The following is a 435-amino-acid chain: CBL-interacting protein kinase 28 (435 aa).

One can recognise a Protein kinase domain in the interval 11–265; it reads YVIGRQLGQG…ISRIKRSAWY (255 aa). ATP contacts are provided by residues 17–25 and Lys40; that span reads LGQGTFGKV. Residue Asp133 is the Proton acceptor of the active site. Residues 151-180 are activation loop; that stretch reads DFGLSALAESRRQDGLLHTACGTPAYVAPE. The NAF domain occupies 283–329; it reads CTSEAPFSGPTICISSERNQEPPNLHNLNAFDIISLSTGFDLSGLFG. A PPI region spans residues 334 to 363; that stretch reads RRESLFTSRKPAAAVLVKLKELAKALNLKV.

This sequence belongs to the protein kinase superfamily. CAMK Ser/Thr protein kinase family. SNF1 subfamily. Mn(2+) is required as a cofactor.

The enzyme catalyses L-seryl-[protein] + ATP = O-phospho-L-seryl-[protein] + ADP + H(+). It carries out the reaction L-threonyl-[protein] + ATP = O-phospho-L-threonyl-[protein] + ADP + H(+). CIPK serine-threonine protein kinases interact with CBL proteins. Binding of a CBL protein to the regulatory NAF domain of CIPK protein lead to the activation of the kinase in a calcium-dependent manner. The sequence is that of CBL-interacting protein kinase 28 (CIPK28) from Oryza sativa subsp. japonica (Rice).